Here is a 1305-residue protein sequence, read N- to C-terminus: Cyclin-G-associated kinase (1305 aa).

Ser-2 carries the post-translational modification N-acetylserine. Ser-2 and Ser-16 each carry phosphoserine. A Protein kinase domain is found at Leu-40–Ala-317. ATP-binding positions include Leu-46–Val-54 and Lys-69. The Proton acceptor role is filled by Asp-173. In terms of domain architecture, Phosphatase tensin-type spans Ser-397–Glu-564. Residue Ser-454 is modified to Phosphoserine. The C2 tensin-type domain maps to Ser-570–Glu-708. Disordered regions lie at residues Val-707–Ile-732 and Phe-747–Thr-854. Phosphoserine is present on Ser-768. Thr-774 carries the post-translational modification Phosphothreonine. A compositionally biased stretch (polar residues) spans Ser-776–Phe-789. Ser-781 is modified (phosphoserine). Thr-792 carries the phosphothreonine modification. Residues Leu-805–Val-816 show a composition bias toward polar residues. Phosphoserine is present on residues Ser-809, Ser-824, and Ser-827. Positions Asp-822–Ala-832 are enriched in acidic residues. A compositionally biased stretch (basic and acidic residues) spans Ser-836 to Pro-848. Residue Ser-938 is modified to Phosphoserine. Positions Asp-1037–Arg-1139 are disordered. Residues Asp-1084–Leu-1099 show a composition bias toward low complexity. Residues Thr-1111–Pro-1132 show a composition bias toward polar residues. Arg-1122 bears the Omega-N-methylarginine mark. Ser-1171 bears the Phosphoserine mark. The 65-residue stretch at Ser-1241–Phe-1305 folds into the J domain.

This sequence belongs to the protein kinase superfamily. Ser/Thr protein kinase family.

Its subcellular location is the cytoplasm. It localises to the perinuclear region. The protein resides in the golgi apparatus. The protein localises to the trans-Golgi network. It is found in the cell junction. Its subcellular location is the focal adhesion. It localises to the cytoplasmic vesicle. The protein resides in the clathrin-coated vesicle. The enzyme catalyses L-seryl-[protein] + ATP = O-phospho-L-seryl-[protein] + ADP + H(+). The catalysed reaction is L-threonyl-[protein] + ATP = O-phospho-L-threonyl-[protein] + ADP + H(+). Functionally, associates with cyclin G and CDK5. Seems to act as an auxilin homolog that is involved in the uncoating of clathrin-coated vesicles by Hsc70 in non-neuronal cells. Expression oscillates slightly during the cell cycle, peaking at G1. May play a role in clathrin-mediated endocytosis and intracellular trafficking, and in the dynamics of clathrin assembly/disassembly. This chain is Cyclin-G-associated kinase, found in Mus musculus (Mouse).